The following is a 417-amino-acid chain: Serine hydroxymethyltransferase (417 aa).

(6S)-5,6,7,8-tetrahydrofolate contacts are provided by residues leucine 121 and 125–127 (GHL). Lysine 229 carries the N6-(pyridoxal phosphate)lysine modification. 355–357 (SPF) contributes to the (6S)-5,6,7,8-tetrahydrofolate binding site.

Belongs to the SHMT family. Homodimer. Pyridoxal 5'-phosphate is required as a cofactor.

The protein localises to the cytoplasm. It carries out the reaction (6R)-5,10-methylene-5,6,7,8-tetrahydrofolate + glycine + H2O = (6S)-5,6,7,8-tetrahydrofolate + L-serine. It participates in one-carbon metabolism; tetrahydrofolate interconversion. Its pathway is amino-acid biosynthesis; glycine biosynthesis; glycine from L-serine: step 1/1. In terms of biological role, catalyzes the reversible interconversion of serine and glycine with tetrahydrofolate (THF) serving as the one-carbon carrier. This reaction serves as the major source of one-carbon groups required for the biosynthesis of purines, thymidylate, methionine, and other important biomolecules. Also exhibits THF-independent aldolase activity toward beta-hydroxyamino acids, producing glycine and aldehydes, via a retro-aldol mechanism. The protein is Serine hydroxymethyltransferase of Erwinia tasmaniensis (strain DSM 17950 / CFBP 7177 / CIP 109463 / NCPPB 4357 / Et1/99).